The chain runs to 226 residues: Apoptosis regulator OPG045 (226 aa).

Belongs to the orthopoxvirus OPG045 family. In terms of assembly, homodimer. Interacts with host pro-apoptotic protein BCL2L11 (via BH3 domain). Interacts with host NLRP1. Interacts with host BAK.

The protein localises to the host mitochondrion outer membrane. It localises to the host cytoplasm. Functionally, plays a role in evading host innate immune response by inhibiting host inflammasome activation. Interacts with and inhibits NLR-mediated interleukin-1 beta/IL1B production in infected cells. At the host mitochondria outer membrane, interacts with the BH3 domain of host BAK and prevents BAK from binding active BAX. In turn, host apoptosis is inhibited. The polypeptide is Apoptosis regulator OPG045 (OPG045) (Homo sapiens (Human)).